Reading from the N-terminus, the 177-residue chain is ATP synthase subunit delta (177 aa).

This sequence belongs to the ATPase delta chain family. In terms of assembly, F-type ATPases have 2 components, F(1) - the catalytic core - and F(0) - the membrane proton channel. F(1) has five subunits: alpha(3), beta(3), gamma(1), delta(1), epsilon(1). F(0) has three main subunits: a(1), b(2) and c(10-14). The alpha and beta chains form an alternating ring which encloses part of the gamma chain. F(1) is attached to F(0) by a central stalk formed by the gamma and epsilon chains, while a peripheral stalk is formed by the delta and b chains.

It is found in the cell inner membrane. In terms of biological role, f(1)F(0) ATP synthase produces ATP from ADP in the presence of a proton or sodium gradient. F-type ATPases consist of two structural domains, F(1) containing the extramembraneous catalytic core and F(0) containing the membrane proton channel, linked together by a central stalk and a peripheral stalk. During catalysis, ATP synthesis in the catalytic domain of F(1) is coupled via a rotary mechanism of the central stalk subunits to proton translocation. Its function is as follows. This protein is part of the stalk that links CF(0) to CF(1). It either transmits conformational changes from CF(0) to CF(1) or is implicated in proton conduction. This chain is ATP synthase subunit delta, found in Aliivibrio fischeri (strain MJ11) (Vibrio fischeri).